Reading from the N-terminus, the 78-residue chain is Acyl carrier protein (78 aa).

The Carrier domain occupies 2–77; it reads SNIEDRVRKI…AAIDYVNSAS (76 aa). O-(pantetheine 4'-phosphoryl)serine is present on Ser-37.

Belongs to the acyl carrier protein (ACP) family. 4'-phosphopantetheine is transferred from CoA to a specific serine of apo-ACP by AcpS. This modification is essential for activity because fatty acids are bound in thioester linkage to the sulfhydryl of the prosthetic group.

It localises to the cytoplasm. It functions in the pathway lipid metabolism; fatty acid biosynthesis. Functionally, carrier of the growing fatty acid chain in fatty acid biosynthesis. The polypeptide is Acyl carrier protein (Photobacterium profundum (strain SS9)).